We begin with the raw amino-acid sequence, 206 residues long: Large ribosomal subunit protein uL13y (206 aa).

It belongs to the universal ribosomal protein uL13 family.

In Arabidopsis thaliana (Mouse-ear cress), this protein is Large ribosomal subunit protein uL13y (RPL13AB).